Here is a 448-residue protein sequence, read N- to C-terminus: Neurexin-1b-beta (448 aa).

A signal peptide spans 1-38 (MFGGWRLVVWQIFSEIITRRLGFWICLYFAALSVGMIS). At 39–375 (GSEPLVRTRH…EVFRESNGTT (337 aa)) the chain is on the extracellular side. The Laminin G-like domain occupies 71-269 (STYVFGRQGG…DPNVRMEGSV (199 aa)). The helical transmembrane segment at 376 to 396 (GMVVGIVAGAALCILILLYAM) threads the bilayer. Residues 397–448 (YKYRNRDEGSYHVDESRNYICNSNGAALKEKNTADDDSGSKSKKNKNKEYYV) lie on the Cytoplasmic side of the membrane. A compositionally biased stretch (basic and acidic residues) spans 426-436 (EKNTADDDSGS). The interval 426-448 (EKNTADDDSGSKSKKNKNKEYYV) is disordered.

It belongs to the neurexin family.

The protein localises to the membrane. In terms of biological role, neuronal cell surface protein that may be involved in cell recognition and cell adhesion. May play a role in formation or maintenance of synaptic junctions. In Danio rerio (Zebrafish), this protein is Neurexin-1b-beta (nrxn1b).